The following is a 352-amino-acid chain: Glycerol-3-phosphate dehydrogenase [NAD(P)+] (352 aa).

The NADPH site is built by S11, W12, R32, and K105. Positions 105, 133, and 135 each coordinate sn-glycerol 3-phosphate. A137 contacts NADPH. Sn-glycerol 3-phosphate-binding residues include K188, D241, S251, R252, and N253. K188 (proton acceptor) is an active-site residue. R252 is a binding site for NADPH. NADPH contacts are provided by V276 and E278.

This sequence belongs to the NAD-dependent glycerol-3-phosphate dehydrogenase family.

Its subcellular location is the cytoplasm. It catalyses the reaction sn-glycerol 3-phosphate + NAD(+) = dihydroxyacetone phosphate + NADH + H(+). The catalysed reaction is sn-glycerol 3-phosphate + NADP(+) = dihydroxyacetone phosphate + NADPH + H(+). It functions in the pathway membrane lipid metabolism; glycerophospholipid metabolism. In terms of biological role, catalyzes the reduction of the glycolytic intermediate dihydroxyacetone phosphate (DHAP) to sn-glycerol 3-phosphate (G3P), the key precursor for phospholipid synthesis. The polypeptide is Glycerol-3-phosphate dehydrogenase [NAD(P)+] (Desulfitobacterium hafniense (strain Y51)).